A 302-amino-acid chain; its full sequence is MPEATDLEELKRGTDLVKRGFARMQKGGVIMDVVTREQARIAEDTGAVAVMALEAVPADIRKRGGVARMPDPENVTEIIDEVSIPVMGKSRIGHRKEAEILESLGVDMIDESEVLTPADDEYHTDKRDFASPFVCGARDLPEALRRIREGAAMIRTKGEAGTGDVNQAVKHQRTIKTQIRTLTGLNHEEREKWAREHGAPRDLVHETAEAGRLPVVNFAAGGIATPADAALMMYHGCDGIFVGSGIFGAEDPEAMGTAIVEAVNNWDDPDELADIASGIGKGMKGQSNEDLPDEEKLQGRGV.

Asp-32 contributes to the D-ribose 5-phosphate binding site. Lys-89 (schiff-base intermediate with D-ribose 5-phosphate) is an active-site residue. Gly-161 provides a ligand contact to D-ribose 5-phosphate. Arg-173 contributes to the D-glyceraldehyde 3-phosphate binding site. D-ribose 5-phosphate-binding positions include Gly-222 and 243–244 (GS). Residues 278-302 (GIGKGMKGQSNEDLPDEEKLQGRGV) are disordered.

This sequence belongs to the PdxS/SNZ family. In the presence of PdxT, forms a dodecamer of heterodimers.

It carries out the reaction aldehydo-D-ribose 5-phosphate + D-glyceraldehyde 3-phosphate + L-glutamine = pyridoxal 5'-phosphate + L-glutamate + phosphate + 3 H2O + H(+). The protein operates within cofactor biosynthesis; pyridoxal 5'-phosphate biosynthesis. Catalyzes the formation of pyridoxal 5'-phosphate from ribose 5-phosphate (RBP), glyceraldehyde 3-phosphate (G3P) and ammonia. The ammonia is provided by the PdxT subunit. Can also use ribulose 5-phosphate and dihydroxyacetone phosphate as substrates, resulting from enzyme-catalyzed isomerization of RBP and G3P, respectively. This chain is Pyridoxal 5'-phosphate synthase subunit PdxS, found in Halorubrum lacusprofundi (strain ATCC 49239 / DSM 5036 / JCM 8891 / ACAM 34).